The following is a 142-amino-acid chain: RNA-directed DNA polymerase homolog (142 aa).

It localises to the mitochondrion. It carries out the reaction RNA(n) + a ribonucleoside 5'-triphosphate = RNA(n+1) + diphosphate. This Oenothera berteroana (Bertero's evening primrose) protein is RNA-directed DNA polymerase homolog.